The following is a 953-amino-acid chain: Ribonuclease E (953 aa).

Disordered regions lie at residues methionine 1 to leucine 23 and valine 118 to proline 314. Residues serine 14 to leucine 23 show a composition bias toward basic and acidic residues. A compositionally biased stretch (acidic residues) spans leucine 127–glycine 150. A compositionally biased stretch (basic residues) spans asparagine 157 to arginine 169. The span at aspartate 183–phenylalanine 193 shows a compositional bias: polar residues. Acidic residues predominate over residues alanine 199 to glycine 223. Positions arginine 230 to serine 240 are enriched in basic residues. 2 stretches are compositionally biased toward basic and acidic residues: residues valine 263–aspartate 272 and threonine 294–arginine 311. An S1 motif domain is found at glycine 376–glutamine 453. Residues aspartate 647 and aspartate 691 each coordinate Mg(2+). Residues cysteine 749 and cysteine 752 each coordinate Zn(2+). Disordered stretches follow at residues serine 766–glutamate 808 and leucine 822–aspartate 953. Acidic residues predominate over residues aspartate 848 to alanine 915.

Belongs to the RNase E/G family. In terms of assembly, assembles into a homotetramer formed by a dimer of dimers. Interacts with DNA-binding protein HU (hupB). Requires Mg(2+) as cofactor. Zn(2+) is required as a cofactor.

Its subcellular location is the cytoplasm. The catalysed reaction is Endonucleolytic cleavage of single-stranded RNA in A- and U-rich regions.. In terms of biological role, endoribonuclease that plays a central role in RNA processing and decay. Plays a major role in pre-16S rRNA maturation, probably generating the mature 5'-end, and a minor role in pre-5S and pre-23S rRNA maturation. Probably also processes tRNA. RNase E and HupB jointly contribute to cellular adaptation to changing growth conditions and survival during antibiotic treatment and in the host. This is Ribonuclease E from Mycobacterium tuberculosis (strain ATCC 25618 / H37Rv).